Here is a 162-residue protein sequence, read N- to C-terminus: UPF0262 protein Acry_0160 (162 aa).

It belongs to the UPF0262 family.

The polypeptide is UPF0262 protein Acry_0160 (Acidiphilium cryptum (strain JF-5)).